The primary structure comprises 668 residues: Alpha-1,4-glucan:maltose-1-phosphate maltosyltransferase (668 aa).

The disordered stretch occupies residues 263-288; the sequence is RKGRNNSLTPAPDDPGSPYAIGSEEG. Alpha-maltose 1-phosphate is bound by residues K264, Q324, and D359. D395 serves as the catalytic Nucleophile. Alpha-maltose 1-phosphate is bound at residue N396. Catalysis depends on E424, which acts as the Proton donor. Alpha-maltose 1-phosphate is bound at residue 535–536; the sequence is KY.

The protein belongs to the glycosyl hydrolase 13 family. GlgE subfamily. In terms of assembly, homodimer.

The catalysed reaction is alpha-maltose 1-phosphate + [(1-&gt;4)-alpha-D-glucosyl](n) = [(1-&gt;4)-alpha-D-glucosyl](n+2) + phosphate. Its function is as follows. Maltosyltransferase that uses maltose 1-phosphate (M1P) as the sugar donor to elongate linear or branched alpha-(1-&gt;4)-glucans. Is involved in a branched alpha-glucan biosynthetic pathway from trehalose, together with TreS, Mak and GlgB. The polypeptide is Alpha-1,4-glucan:maltose-1-phosphate maltosyltransferase (Cereibacter sphaeroides (strain ATCC 17023 / DSM 158 / JCM 6121 / CCUG 31486 / LMG 2827 / NBRC 12203 / NCIMB 8253 / ATH 2.4.1.) (Rhodobacter sphaeroides)).